Consider the following 76-residue polypeptide: Cytochrome c oxidase-assembly factor COX23, mitochondrial (76 aa).

Residues 30–72 (YDPCQDFADRSIKCMRRNGNDKTMCSDYFQAYRDCKKEWTTQR) form the CHCH domain. 2 consecutive short sequence motifs (cx9C motif) follow at residues 33–43 (CQDFADRSIKC) and 54–64 (CSDYFQAYRDC). 2 cysteine pairs are disulfide-bonded: Cys33/Cys64 and Cys43/Cys54.

Its subcellular location is the mitochondrion intermembrane space. Functionally, required for the assembly of cytochrome c oxidase. The protein is Cytochrome c oxidase-assembly factor COX23, mitochondrial (COX23) of Paracoccidioides brasiliensis.